Consider the following 30-residue polypeptide: LGSAPITEEAIATPPSAETKLVPVGYGIKK.

It belongs to the EF-1-beta/EF-1-delta family. As to quaternary structure, EF-1 is composed of 4 subunits: alpha, beta (1B-alpha=beta'), delta (1B-beta), and gamma (1B-gamma).

Functionally, EF-1-beta and EF-1-delta stimulate the exchange of GDP bound to EF-1-alpha to GTP. The chain is Elongation factor 1-delta from Populus euphratica (Euphrates poplar).